The chain runs to 263 residues: Probable 6-oxopurine nucleoside phosphorylase (263 aa).

Residues Thr-9, 49–50, and 82–83 contribute to the phosphate site; these read RH and TA. Met-181 contacts substrate. Thr-182 contributes to the phosphate binding site. 205 to 207 provides a ligand contact to substrate; that stretch reads NYA.

This sequence belongs to the PNP/MTAP phosphorylase family. MTAP subfamily. As to quaternary structure, homohexamer. Dimer of a homotrimer.

The enzyme catalyses a purine D-ribonucleoside + phosphate = a purine nucleobase + alpha-D-ribose 1-phosphate. The protein operates within purine metabolism; purine nucleoside salvage. In terms of biological role, purine nucleoside phosphorylase which is highly specific for 6-oxopurine nucleosides. Cleaves guanosine or inosine to respective bases and sugar-1-phosphate molecules. Involved in purine salvage. The sequence is that of Probable 6-oxopurine nucleoside phosphorylase from Dictyoglomus turgidum (strain DSM 6724 / Z-1310).